Consider the following 324-residue polypeptide: Acetyl-coenzyme A carboxylase carboxyl transferase subunit alpha (324 aa).

A CoA carboxyltransferase C-terminal domain is found at 37–291; sequence ILEDKLENLE…DLMIRKTFEQ (255 aa).

This sequence belongs to the AccA family. In terms of assembly, acetyl-CoA carboxylase is a heterohexamer composed of biotin carboxyl carrier protein (AccB), biotin carboxylase (AccC) and two subunits each of ACCase subunit alpha (AccA) and ACCase subunit beta (AccD).

It localises to the cytoplasm. The enzyme catalyses N(6)-carboxybiotinyl-L-lysyl-[protein] + acetyl-CoA = N(6)-biotinyl-L-lysyl-[protein] + malonyl-CoA. Its pathway is lipid metabolism; malonyl-CoA biosynthesis; malonyl-CoA from acetyl-CoA: step 1/1. In terms of biological role, component of the acetyl coenzyme A carboxylase (ACC) complex. First, biotin carboxylase catalyzes the carboxylation of biotin on its carrier protein (BCCP) and then the CO(2) group is transferred by the carboxyltransferase to acetyl-CoA to form malonyl-CoA. The sequence is that of Acetyl-coenzyme A carboxylase carboxyl transferase subunit alpha from Bacillus cereus (strain G9842).